The sequence spans 858 residues: Bifunctional uridylyltransferase/uridylyl-removing enzyme (858 aa).

The uridylyltransferase stretch occupies residues 1-324 (MSAHAAPSPE…PATSGITRVL (324 aa)). The uridylyl-removing stretch occupies residues 325 to 681 (SPDRFVEKQG…ARPSPIGDAL (357 aa)). Positions 443 to 565 (VDQHILMVLR…VGNERYLTAL (123 aa)) constitute an HD domain. ACT domains lie at 682–761 (QVLV…PEPS) and 790–858 (ILSV…AIAV).

Belongs to the GlnD family. It depends on Mg(2+) as a cofactor.

It carries out the reaction [protein-PII]-L-tyrosine + UTP = [protein-PII]-uridylyl-L-tyrosine + diphosphate. The enzyme catalyses [protein-PII]-uridylyl-L-tyrosine + H2O = [protein-PII]-L-tyrosine + UMP + H(+). Its activity is regulated as follows. Uridylyltransferase (UTase) activity is inhibited by glutamine, while glutamine activates uridylyl-removing (UR) activity. Modifies, by uridylylation and deuridylylation, the PII regulatory proteins (GlnB and homologs), in response to the nitrogen status of the cell that GlnD senses through the glutamine level. Under low glutamine levels, catalyzes the conversion of the PII proteins and UTP to PII-UMP and PPi, while under higher glutamine levels, GlnD hydrolyzes PII-UMP to PII and UMP (deuridylylation). Thus, controls uridylylation state and activity of the PII proteins, and plays an important role in the regulation of nitrogen fixation and metabolism. The polypeptide is Bifunctional uridylyltransferase/uridylyl-removing enzyme (Burkholderia lata (strain ATCC 17760 / DSM 23089 / LMG 22485 / NCIMB 9086 / R18194 / 383)).